We begin with the raw amino-acid sequence, 214 residues long: Octanoyltransferase (214 aa).

A BPL/LPL catalytic domain is found at 34–214 (GLQKELVWLL…KFNEIFSSFN (181 aa)). Substrate is bound by residues 73-80 (RGGKYTYH), 145-147 (AFG), and 158-160 (GVS). C176 acts as the Acyl-thioester intermediate in catalysis.

The protein belongs to the LipB family.

Its subcellular location is the cytoplasm. The enzyme catalyses octanoyl-[ACP] + L-lysyl-[protein] = N(6)-octanoyl-L-lysyl-[protein] + holo-[ACP] + H(+). The protein operates within protein modification; protein lipoylation via endogenous pathway; protein N(6)-(lipoyl)lysine from octanoyl-[acyl-carrier-protein]: step 1/2. Catalyzes the transfer of endogenously produced octanoic acid from octanoyl-acyl-carrier-protein onto the lipoyl domains of lipoate-dependent enzymes. Lipoyl-ACP can also act as a substrate although octanoyl-ACP is likely to be the physiological substrate. The sequence is that of Octanoyltransferase from Ehrlichia canis (strain Jake).